The following is a 549-amino-acid chain: Glucose-6-phosphate isomerase (549 aa).

Residue Glu355 is the Proton donor of the active site. Residues His387 and Lys515 contribute to the active site.

Belongs to the GPI family.

It is found in the cytoplasm. It catalyses the reaction alpha-D-glucose 6-phosphate = beta-D-fructose 6-phosphate. It functions in the pathway carbohydrate biosynthesis; gluconeogenesis. Its pathway is carbohydrate degradation; glycolysis; D-glyceraldehyde 3-phosphate and glycerone phosphate from D-glucose: step 2/4. Functionally, catalyzes the reversible isomerization of glucose-6-phosphate to fructose-6-phosphate. The protein is Glucose-6-phosphate isomerase of Histophilus somni (strain 2336) (Haemophilus somnus).